A 393-amino-acid chain; its full sequence is Elongation factor Tu (393 aa).

A tr-type G domain is found at 10–203 (KPHVNIGTIG…AVDAFIPDPV (194 aa)). The G1 stretch occupies residues 19-26 (GHVDHGKT). A GTP-binding site is contributed by 19-26 (GHVDHGKT). Threonine 26 lines the Mg(2+) pocket. A G2 region spans residues 60 to 64 (GITIS). The segment at 81–84 (DCPG) is G3. GTP contacts are provided by residues 81-85 (DCPGH) and 136-139 (NKVD). A G4 region spans residues 136-139 (NKVD). The interval 173 to 175 (SAL) is G5.

It belongs to the TRAFAC class translation factor GTPase superfamily. Classic translation factor GTPase family. EF-Tu/EF-1A subfamily. Monomer.

Its subcellular location is the cytoplasm. The catalysed reaction is GTP + H2O = GDP + phosphate + H(+). In terms of biological role, GTP hydrolase that promotes the GTP-dependent binding of aminoacyl-tRNA to the A-site of ribosomes during protein biosynthesis. The polypeptide is Elongation factor Tu (Chlorobium chlorochromatii (strain CaD3)).